Here is a 396-residue protein sequence, read N- to C-terminus: Putative carbamoyltransferase YgeW (396 aa).

Residues 71-74 (STRT), Gln-98, 165-168 (HPTQ), and 330-331 (CL) each bind carbamoyl phosphate.

Belongs to the aspartate/ornithine carbamoyltransferase superfamily. As to quaternary structure, homotrimer.

The polypeptide is Putative carbamoyltransferase YgeW (ygeW) (Escherichia coli O6:H1 (strain CFT073 / ATCC 700928 / UPEC)).